We begin with the raw amino-acid sequence, 2298 residues long: Protein Ycf2 (2298 aa).

1652-1659 (GSIGTGRS) provides a ligand contact to ATP.

The protein belongs to the Ycf2 family.

It is found in the plastid. The protein resides in the chloroplast stroma. Probable ATPase of unknown function. Its presence in a non-photosynthetic plant (Epifagus virginiana) and experiments in tobacco indicate that it has an essential function which is probably not related to photosynthesis. The sequence is that of Protein Ycf2 from Aethionema cordifolium (Lebanon stonecress).